Consider the following 385-residue polypeptide: Lipid-A-disaccharide synthase 2 (385 aa).

This sequence belongs to the LpxB family.

The enzyme catalyses a lipid X + a UDP-2-N,3-O-bis[(3R)-3-hydroxyacyl]-alpha-D-glucosamine = a lipid A disaccharide + UDP + H(+). It participates in bacterial outer membrane biogenesis; LPS lipid A biosynthesis. Functionally, condensation of UDP-2,3-diacylglucosamine and 2,3-diacylglucosamine-1-phosphate to form lipid A disaccharide, a precursor of lipid A, a phosphorylated glycolipid that anchors the lipopolysaccharide to the outer membrane of the cell. The polypeptide is Lipid-A-disaccharide synthase 2 (Legionella pneumophila subsp. pneumophila (strain Philadelphia 1 / ATCC 33152 / DSM 7513)).